A 516-amino-acid polypeptide reads, in one-letter code: Thiosulfate sulfurtransferase/rhodanese-like domain-containing protein 2 (516 aa).

Ser269 carries the post-translational modification Phosphoserine. The region spanning 301-396 (EQSDTILLDC…YLEEFPDGFY (96 aa)) is the Rhodanese domain. Cys355 functions as the Cysteine persulfide intermediate in the catalytic mechanism. The segment at 490 to 516 (RELLQHVRQPVSPEPGPDAEEDGPVLV) is disordered. A compositionally biased stretch (acidic residues) spans 506 to 516 (PDAEEDGPVLV).

This chain is Thiosulfate sulfurtransferase/rhodanese-like domain-containing protein 2 (TSTD2), found in Pongo abelii (Sumatran orangutan).